The primary structure comprises 194 residues: ATP-dependent Clp protease proteolytic subunit 3 (194 aa).

The Nucleophile role is filled by S96. Residue H121 is part of the active site.

It belongs to the peptidase S14 family. In terms of assembly, fourteen ClpP subunits assemble into 2 heptameric rings which stack back to back to give a disk-like structure with a central cavity, resembling the structure of eukaryotic proteasomes.

It is found in the cytoplasm. The catalysed reaction is Hydrolysis of proteins to small peptides in the presence of ATP and magnesium. alpha-casein is the usual test substrate. In the absence of ATP, only oligopeptides shorter than five residues are hydrolyzed (such as succinyl-Leu-Tyr-|-NHMec, and Leu-Tyr-Leu-|-Tyr-Trp, in which cleavage of the -Tyr-|-Leu- and -Tyr-|-Trp bonds also occurs).. In terms of biological role, cleaves peptides in various proteins in a process that requires ATP hydrolysis. Has a chymotrypsin-like activity. Plays a major role in the degradation of misfolded proteins. The chain is ATP-dependent Clp protease proteolytic subunit 3 from Prochlorococcus marinus (strain NATL2A).